The chain runs to 71 residues: Beta-defensin 124 (71 aa).

Positions 1 to 22 are cleaved as a signal peptide; sequence MTQLLLFLVALLVLGHVPSGRS. Disulfide bonds link cysteine 27/cysteine 54, cysteine 34/cysteine 48, and cysteine 38/cysteine 55.

Belongs to the beta-defensin family.

The protein localises to the secreted. Has antibacterial activity. The chain is Beta-defensin 124 (DEFB124) from Homo sapiens (Human).